We begin with the raw amino-acid sequence, 382 residues long: ORC1-type DNA replication protein 1 (382 aa).

Residues 63–67 (TGKTA), Y205, and R217 each bind ATP.

The protein belongs to the CDC6/cdc18 family. As to quaternary structure, monomer. Interacts with MCM via the WH domain. Autophosphorylated on a serine. Phosphorylation is stimulated by binding to MCM. Both single-stranded DNA and double-stranded DNA inhibit the phosphorylation reaction.

In terms of biological role, involved in regulation of DNA replication. May play an essential role in origin recognition. Binds to DNA, with a preference for origin-specific double-stranded sequences. Does not bind single-stranded DNA. Inhibits MCM helicase activity but does not affect its oligomeric state. This chain is ORC1-type DNA replication protein 1 (cdc6-1), found in Methanothermobacter thermautotrophicus (strain ATCC 29096 / DSM 1053 / JCM 10044 / NBRC 100330 / Delta H) (Methanobacterium thermoautotrophicum).